The primary structure comprises 310 residues: Putative S-adenosyl-L-methionine-dependent methyltransferase MMAR_0357 (310 aa).

S-adenosyl-L-methionine contacts are provided by residues D132 and 161–162; that span reads DL.

It belongs to the UPF0677 family.

Its function is as follows. Exhibits S-adenosyl-L-methionine-dependent methyltransferase activity. This Mycobacterium marinum (strain ATCC BAA-535 / M) protein is Putative S-adenosyl-L-methionine-dependent methyltransferase MMAR_0357.